A 208-amino-acid chain; its full sequence is Large ribosomal subunit protein bL25 (208 aa).

A disordered region spans residues methionine 1–arginine 21.

It belongs to the bacterial ribosomal protein bL25 family. CTC subfamily. In terms of assembly, part of the 50S ribosomal subunit; part of the 5S rRNA/L5/L18/L25 subcomplex. Contacts the 5S rRNA. Binds to the 5S rRNA independently of L5 and L18.

This is one of the proteins that binds to the 5S RNA in the ribosome where it forms part of the central protuberance. The protein is Large ribosomal subunit protein bL25 of Hahella chejuensis (strain KCTC 2396).